The sequence spans 451 residues: Tryptophan biosynthesis protein TrpCF (451 aa).

Positions 1–256 are indole-3-glycerol phosphate synthase; that stretch reads MQETILNKII…TNIKSLIIGD (256 aa). Residues 257–451 form an N-(5'-phosphoribosyl)anthranilate isomerase region; that stretch reads NKVCGLTRII…ISLIFKKLTF (195 aa).

The protein in the N-terminal section; belongs to the TrpC family. It in the C-terminal section; belongs to the TrpF family. As to quaternary structure, monomer.

It catalyses the reaction N-(5-phospho-beta-D-ribosyl)anthranilate = 1-(2-carboxyphenylamino)-1-deoxy-D-ribulose 5-phosphate. The catalysed reaction is 1-(2-carboxyphenylamino)-1-deoxy-D-ribulose 5-phosphate + H(+) = (1S,2R)-1-C-(indol-3-yl)glycerol 3-phosphate + CO2 + H2O. It participates in amino-acid biosynthesis; L-tryptophan biosynthesis; L-tryptophan from chorismate: step 3/5. It functions in the pathway amino-acid biosynthesis; L-tryptophan biosynthesis; L-tryptophan from chorismate: step 4/5. Functionally, bifunctional enzyme that catalyzes two sequential steps of tryptophan biosynthetic pathway. The first reaction is catalyzed by the isomerase, coded by the TrpF domain; the second reaction is catalyzed by the synthase, coded by the TrpC domain. This is Tryptophan biosynthesis protein TrpCF (trpC) from Buchnera aphidicola subsp. Schizaphis graminum (strain Sg).